We begin with the raw amino-acid sequence, 483 residues long: Cobyric acid synthase (483 aa).

The 188-residue stretch at 251 to 438 (ALIVAVPMLP…LHGVFSADRF (188 aa)) folds into the GATase cobBQ-type domain. Catalysis depends on cysteine 333, which acts as the Nucleophile. Residue histidine 430 is part of the active site.

The protein belongs to the CobB/CobQ family. CobQ subfamily.

It functions in the pathway cofactor biosynthesis; adenosylcobalamin biosynthesis. Catalyzes amidations at positions B, D, E, and G on adenosylcobyrinic A,C-diamide. NH(2) groups are provided by glutamine, and one molecule of ATP is hydrogenolyzed for each amidation. This chain is Cobyric acid synthase, found in Brucella suis (strain ATCC 23445 / NCTC 10510).